Consider the following 404-residue polypeptide: Cysteine desulfurase IscS (404 aa).

Pyridoxal 5'-phosphate contacts are provided by residues 75 to 76 (AT), N155, Q183, and 203 to 205 (SGH). An N6-(pyridoxal phosphate)lysine modification is found at K206. T243 serves as a coordination point for pyridoxal 5'-phosphate. C328 acts as the Cysteine persulfide intermediate in catalysis. C328 serves as a coordination point for [2Fe-2S] cluster.

This sequence belongs to the class-V pyridoxal-phosphate-dependent aminotransferase family. NifS/IscS subfamily. In terms of assembly, homodimer. Forms a heterotetramer with IscU, interacts with other sulfur acceptors. Requires pyridoxal 5'-phosphate as cofactor.

It is found in the cytoplasm. It carries out the reaction (sulfur carrier)-H + L-cysteine = (sulfur carrier)-SH + L-alanine. It functions in the pathway cofactor biosynthesis; iron-sulfur cluster biosynthesis. Functionally, master enzyme that delivers sulfur to a number of partners involved in Fe-S cluster assembly, tRNA modification or cofactor biosynthesis. Catalyzes the removal of elemental sulfur atoms from cysteine to produce alanine. Functions as a sulfur delivery protein for Fe-S cluster synthesis onto IscU, an Fe-S scaffold assembly protein, as well as other S acceptor proteins. The sequence is that of Cysteine desulfurase IscS from Actinobacillus succinogenes (strain ATCC 55618 / DSM 22257 / CCUG 43843 / 130Z).